The following is a 252-amino-acid chain: 2-succinyl-6-hydroxy-2,4-cyclohexadiene-1-carboxylate synthase (252 aa).

The protein belongs to the AB hydrolase superfamily. MenH family. In terms of assembly, monomer.

It carries out the reaction 5-enolpyruvoyl-6-hydroxy-2-succinyl-cyclohex-3-ene-1-carboxylate = (1R,6R)-6-hydroxy-2-succinyl-cyclohexa-2,4-diene-1-carboxylate + pyruvate. It participates in quinol/quinone metabolism; 1,4-dihydroxy-2-naphthoate biosynthesis; 1,4-dihydroxy-2-naphthoate from chorismate: step 3/7. It functions in the pathway quinol/quinone metabolism; menaquinone biosynthesis. Functionally, catalyzes a proton abstraction reaction that results in 2,5-elimination of pyruvate from 2-succinyl-5-enolpyruvyl-6-hydroxy-3-cyclohexene-1-carboxylate (SEPHCHC) and the formation of 2-succinyl-6-hydroxy-2,4-cyclohexadiene-1-carboxylate (SHCHC). This is 2-succinyl-6-hydroxy-2,4-cyclohexadiene-1-carboxylate synthase from Salmonella arizonae (strain ATCC BAA-731 / CDC346-86 / RSK2980).